The following is a 67-amino-acid chain: Probable archaeal histone 3 (67 aa).

Interaction with DNA regions lie at residues 20–22 (RVS) and 54–57 (KTVK).

This sequence belongs to the archaeal histone HMF family. As to quaternary structure, homodimer or heterodimer with another histone. Dimers then assemble into higher oligomers, with the DNA wrapped around the protein core.

The protein resides in the cytoplasm. Its subcellular location is the chromosome. Binds and compact DNA (95 to 150 base pairs) to form nucleosome-like structures that contain positive DNA supercoils. Increases the resistance of DNA to thermal denaturation (in vitro). This Methanocaldococcus jannaschii (strain ATCC 43067 / DSM 2661 / JAL-1 / JCM 10045 / NBRC 100440) (Methanococcus jannaschii) protein is Probable archaeal histone 3.